We begin with the raw amino-acid sequence, 3073 residues long: Adhesion G-protein coupled receptor G4 (3073 aa).

A signal peptide spans 1-25 (MRKHILHQRLCGLILVSSFIFLTDS). Residues 26–2691 (LSLKGKRLDF…RSTVDAVNER (2666 aa)) lie on the Extracellular side of the membrane. The 200-residue stretch at 29-228 (KGKRLDFYGE…SPTVDRRLRC (200 aa)) folds into the Pentraxin (PTX) domain. Intrachain disulfides connect Cys-58–Cys-123 and Cys-200–Cys-228. N-linked (GlcNAc...) asparagine glycosylation is present at Asn-233. The disordered stretch occupies residues 253–272 (SQTTGLNPHKTSHSSTLLPE). Residue Asn-662 is glycosylated (N-linked (GlcNAc...) asparagine). 2 stretches are compositionally biased toward polar residues: residues 671–696 (GNAT…ESKV) and 929–951 (GNSA…SSST). 2 disordered regions span residues 671–697 (GNAT…SKVT) and 924–951 (SEKS…SSST). N-linked (GlcNAc...) asparagine glycosylation is found at Asn-1141, Asn-1304, and Asn-1495. Disordered regions lie at residues 1565–1595 (FTSS…AGPT), 1741–1760 (TLTN…STPT), and 1945–1972 (ITLS…SDSR). The span at 1945–1954 (ITLSSNPSVN) shows a compositional bias: polar residues. Residues 1955–1972 (SRATSPTWSSSSLPSDSR) show a composition bias toward low complexity. The GAIN-B domain occupies 2535–2684 (SSEEVIAPQI…GVLMDLSRST (150 aa)). 2 disulfides stabilise this stretch: Cys-2635–Cys-2666 and Cys-2654–Cys-2668. Residues 2635-2684 (CAFWDFDTNNGLGGWNPSGCKLKESNINYTICQCNHLTHFGVLMDLSRST) form a GPS region. The stachel stretch occupies residues 2673–2684 (HFGVLMDLSRST). The chain crosses the membrane as a helical span at residues 2692-2712 (ILVIITYTGCGISSIFLGIAM). Topologically, residues 2713-2728 (VTYIAFHKLRKDYPSK) are cytoplasmic. A helical transmembrane segment spans residues 2729–2749 (ILINLCTALLMLNLAFLVNSW). Residues 2750–2755 (LTSFQK) are Extracellular-facing. Residues 2756-2776 (VGLCITAAVALHYFLLVSLTW) traverse the membrane as a helical segment. Cys-2759 and Cys-2836 are oxidised to a cystine. At 2777–2798 (MGLEAVHMYFALVKVFNTYIPN) the chain is on the cytoplasmic side. Residues 2799-2819 (YILKFCLAGWGIPAITVAIIL) form a helical membrane-spanning segment. Over 2820–2842 (SVRKDLYGTLSPTTPFCWIKDDH) the chain is Extracellular. The helical transmembrane segment at 2843-2863 (IFYISVVAYFCLIFLMNLSMF) threads the bilayer. Over 2864–2892 (CTVLVQLTSVKSQSQKTRKKMILNDLKGT) the chain is Cytoplasmic. Residues 2893-2913 (ISLTFLLGLTWGFAFFAWGPV) form a helical membrane-spanning segment. Position 2914 (Arg-2914) is a topological domain, extracellular. The helical transmembrane segment at 2915–2935 (IFFLYLFAICNTLQGFLIFVF) threads the bilayer. Topologically, residues 2936-3073 (YCVMKESVRE…SSGLGEMFNL (138 aa)) are cytoplasmic.

The protein belongs to the G-protein coupled receptor 2 family. Adhesion G-protein coupled receptor (ADGR) subfamily. Homodimer; homodimerizes via its Pentraxin domain in a calcium-independent manner. Heterodimer of 2 chains generated by proteolytic processing; the large extracellular N-terminal fragment and the membrane-bound C-terminal fragment predominantly remain associated and non-covalently linked. Post-translationally, autoproteolytically processed at the GPS region of the GAIN-B domain; this cleavage modulates receptor activity.

It is found in the membrane. With respect to regulation, forms a heterodimer of 2 chains generated by proteolytic processing that remain associated through non-covalent interactions mediated by the GAIN-B domain. In the inactivated receptor, the Stachel sequence (also named stalk) is embedded in the GAIN-B domain, where it adopts a beta-strand conformation. On activation, the Stachel moves into the 7 transmembrane region and adopts a twisted hook-shaped configuration that forms contacts within the receptor, leading to coupling of a G-alpha protein, which activates signaling. The cleaved GAIN-B and N-terminal domains can then dissociate from the rest of the receptor. Orphan adhesion G-protein coupled receptor (aGPCR). Ligand binding causes a conformation change that triggers signaling via guanine nucleotide-binding proteins (G proteins) and modulates the activity of downstream effectors, such as adenylate cyclase. ADGRG4 is coupled to G(s) G proteins and mediates activation of adenylate cyclase activity. May be act as sensor of mechanical forces. In Mus musculus (Mouse), this protein is Adhesion G-protein coupled receptor G4.